A 143-amino-acid polypeptide reads, in one-letter code: Large ribosomal subunit protein uL15 (143 aa).

Residues M1 to G52 form a disordered region. The span at R21–S31 shows a compositional bias: gly residues.

The protein belongs to the universal ribosomal protein uL15 family. As to quaternary structure, part of the 50S ribosomal subunit.

Binds to the 23S rRNA. The protein is Large ribosomal subunit protein uL15 of Janthinobacterium sp. (strain Marseille) (Minibacterium massiliensis).